The following is a 258-amino-acid chain: Flagellar L-ring protein (258 aa).

An N-terminal signal peptide occupies residues 1–15; the sequence is MKRIVCLALFLSMTG. Residue C16 is the site of N-palmitoyl cysteine attachment. C16 carries the S-diacylglycerol cysteine lipid modification.

This sequence belongs to the FlgH family. The basal body constitutes a major portion of the flagellar organelle and consists of four rings (L,P,S, and M) mounted on a central rod.

The protein resides in the cell outer membrane. Its subcellular location is the bacterial flagellum basal body. Its function is as follows. Assembles around the rod to form the L-ring and probably protects the motor/basal body from shearing forces during rotation. The sequence is that of Flagellar L-ring protein from Vibrio atlanticus (strain LGP32) (Vibrio splendidus (strain Mel32)).